The sequence spans 75 residues: Exodeoxyribonuclease 7 small subunit (75 aa).

It belongs to the XseB family. In terms of assembly, heterooligomer composed of large and small subunits.

The protein localises to the cytoplasm. The catalysed reaction is Exonucleolytic cleavage in either 5'- to 3'- or 3'- to 5'-direction to yield nucleoside 5'-phosphates.. Its function is as follows. Bidirectionally degrades single-stranded DNA into large acid-insoluble oligonucleotides, which are then degraded further into small acid-soluble oligonucleotides. The polypeptide is Exodeoxyribonuclease 7 small subunit (Elusimicrobium minutum (strain Pei191)).